A 218-amino-acid chain; its full sequence is Peptidase E (218 aa).

Catalysis depends on charge relay system residues S123, D138, and H160.

The protein belongs to the peptidase S51 family.

The protein localises to the cytoplasm. The enzyme catalyses Dipeptidase E catalyzes the hydrolysis of dipeptides Asp-|-Xaa. It does not act on peptides with N-terminal Glu, Asn or Gln, nor does it cleave isoaspartyl peptides.. Its function is as follows. Hydrolyzes dipeptides containing N-terminal aspartate residues. May play a role in allowing the cell to use peptide aspartate to spare carbon otherwise required for the synthesis of the aspartate family of amino acids. The sequence is that of Peptidase E from Haemophilus influenzae (strain ATCC 51907 / DSM 11121 / KW20 / Rd).